The sequence spans 326 residues: DNA-directed RNA polymerase subunit alpha (326 aa).

An alpha N-terminal domain (alpha-NTD) region spans residues Met-1–Glu-231. The alpha C-terminal domain (alpha-CTD) stretch occupies residues Ile-247–Lys-326.

Belongs to the RNA polymerase alpha chain family. In terms of assembly, homodimer. The RNAP catalytic core consists of 2 alpha, 1 beta, 1 beta' and 1 omega subunit. When a sigma factor is associated with the core the holoenzyme is formed, which can initiate transcription.

It carries out the reaction RNA(n) + a ribonucleoside 5'-triphosphate = RNA(n+1) + diphosphate. In terms of biological role, DNA-dependent RNA polymerase catalyzes the transcription of DNA into RNA using the four ribonucleoside triphosphates as substrates. The polypeptide is DNA-directed RNA polymerase subunit alpha (Ralstonia nicotianae (strain ATCC BAA-1114 / GMI1000) (Ralstonia solanacearum)).